The chain runs to 738 residues: Ethylene receptor (738 aa).

3 helical membrane-spanning segments follow: residues 23 to 43, 54 to 74, and 92 to 112; these read ISDF…IYFV, VLVQ…INLW, and VLTA…IPDL. Cys65 and His69 together coordinate Cu cation. The GAF domain maps to 158–307; that stretch reads DRHTILKTTL…VVADQVAVAL (150 aa). Positions 350–589 constitute a Histidine kinase domain; sequence VMNHEMRTPM…IFIVKLGFAE (240 aa). His353 carries the phosphohistidine; by autocatalysis modification. Positions 612–729 constitute a Response regulatory domain; that stretch reads PGLKVLVMDD…KMRSVLSELL (118 aa). Asp660 carries the 4-aspartylphosphate modification.

It belongs to the ethylene receptor family. In terms of assembly, homodimer; disulfide-linked. Cu cation is required as a cofactor. In terms of processing, activation probably requires a transfer of a phosphate group between a His in the transmitter domain and an Asp of the receiver domain.

The protein localises to the endoplasmic reticulum membrane. It catalyses the reaction ATP + protein L-histidine = ADP + protein N-phospho-L-histidine.. May act early in the ethylene signal transduction pathway, possibly as an ethylene receptor, or as a regulator of the pathway. This chain is Ethylene receptor (ETR1), found in Prunus persica (Peach).